Consider the following 304-residue polypeptide: Insulin-like growth factor-binding protein 2 (304 aa).

The N-terminal stretch at 1-34 is a signal peptide; it reads MLPRLGGPALPLLLPSLLLLLLLGAGGCGPGVRA. The IGFBP N-terminal domain maps to 36–118; it reads VLFRCPPCTP…VTGAGTCEKR (83 aa). Intrachain disulfides connect Cys-40-Cys-68, Cys-43-Cys-70, Cys-51-Cys-71, Cys-59-Cys-74, Cys-82-Cys-95, Cys-89-Cys-115, Cys-206-Cys-240, Cys-251-Cys-262, and Cys-264-Cys-285. Residues 203–285 form the Thyroglobulin type-1 domain; sequence RTPCQQELDQ…APTIRGDPEC (83 aa). The short motif at 280-282 is the Cell attachment site element; the sequence is RGD.

Interacts with IGF1. Interacts with IGF2. Interacts (via RGD motif) with integrin alpha5/ITGA5; this interaction induces cell migration, adhesion or apoptosis according to the context. Interacts with PTPRB; this interaction leads to PTPRB dimerization and inactivation. Cleaved by MMP9 leading to release of free IGF2 from IGFBP2-IGF2 complex, which contributes to enhance the motility and the growth of astrocytes. In terms of processing, O-glycosylated. As to expression, in adults, expressed in brain, testes, ovaries, and kidney. Expression in the adult liver is barely detectable.

Its subcellular location is the secreted. In terms of biological role, multifunctional protein that plays a critical role in regulating the availability of IGFs such as IGF1 and IGF2 to their receptors and thereby regulates IGF-mediated cellular processes including proliferation, differentiation, and apoptosis in a cell-type specific manner. Functions coordinately with receptor protein tyrosine phosphatase beta/PTPRB and the IGF1 receptor to regulate IGF1-mediated signaling by stimulating the phosphorylation of PTEN leading to its inactivation and AKT1 activation. Plays a positive role in cell migration via interaction with integrin alpha5/ITGA5 through an RGD motif. Additionally, interaction with ITGA5/ITGB1 enhances the adhesion of endothelial progenitor cells to endothelial cells. Upon mitochondrial damage, facilitates apoptosis with ITGA5 of podocytes, and then activates the phosphorylation of focal adhesion kinase (FAK)-mediated mitochondrial injury. This Rattus norvegicus (Rat) protein is Insulin-like growth factor-binding protein 2 (Igfbp2).